The primary structure comprises 52 residues: Light-harvesting protein B-880 alpha chain (52 aa).

Over 1 to 12 (MWKVWLLFDPRR) the chain is Cytoplasmic. The chain crosses the membrane as a helical span at residues 13 to 33 (TLVALFTFLFVLALLIHFILL). H29 serves as a coordination point for a bacteriochlorophyll. The Periplasmic segment spans residues 34-52 (STDRFNWMQGAPTAPAQTS).

This sequence belongs to the antenna complex alpha subunit family. In terms of assembly, the core complex is formed by different alpha and beta chains, binding bacteriochlorophyll molecules, and arranged most probably in tetrameric structures disposed around the reaction center. The non-pigmented gamma chains may constitute additional components.

It localises to the cell inner membrane. Functionally, antenna complexes are light-harvesting systems, which transfer the excitation energy to the reaction centers. The protein is Light-harvesting protein B-880 alpha chain of Afifella marina (Rhodobium marinum).